Here is a 178-residue protein sequence, read N- to C-terminus: Cytochrome b6-f complex iron-sulfur subunit (178 aa).

A helical membrane pass occupies residues 20–42 (LLTFGTATGVALGALYPVANYFM). Residues 71-161 (NHPAGDRSLV…IDVEDDKVFV (91 aa)) enclose the Rieske domain. [2Fe-2S] cluster-binding residues include Cys-107, His-109, Cys-125, and His-128. Residues Cys-112 and Cys-127 are joined by a disulfide bond.

Belongs to the Rieske iron-sulfur protein family. The 4 large subunits of the cytochrome b6-f complex are cytochrome b6, subunit IV (17 kDa polypeptide, PetD), cytochrome f and the Rieske protein, while the 4 small subunits are PetG, PetL, PetM and PetN. The complex functions as a dimer. It depends on [2Fe-2S] cluster as a cofactor.

The protein resides in the cellular thylakoid membrane. It catalyses the reaction 2 oxidized [plastocyanin] + a plastoquinol + 2 H(+)(in) = 2 reduced [plastocyanin] + a plastoquinone + 4 H(+)(out). Component of the cytochrome b6-f complex, which mediates electron transfer between photosystem II (PSII) and photosystem I (PSI), cyclic electron flow around PSI, and state transitions. The sequence is that of Cytochrome b6-f complex iron-sulfur subunit from Prochlorococcus marinus (strain MIT 9211).